A 1828-amino-acid chain; its full sequence is Separin (1828 aa).

Residues 1647–1741 enclose the Peptidase C50 domain; the sequence is KEAGSYILNP…SGALYECGSF (95 aa). The active site involves C1730.

Interacts with cut2. Interacts with rad21.

The protein resides in the cytoplasm. Its subcellular location is the nucleus. The enzyme catalyses All bonds known to be hydrolyzed by this endopeptidase have arginine in P1 and an acidic residue in P4. P6 is often occupied by an acidic residue or by a hydroxy-amino-acid residue, the phosphorylation of which enhances cleavage.. Its activity is regulated as follows. It is inactivated via its interaction with cut2, which probably covers its active site. Cut2 degradation at anaphase, liberates it and triggers rad21 cleavage. Its function is as follows. Caspase-like protease, which plays a central role in the chromosome segregation by cleaving the rad21 subunit of the cohesin complex at the onset of anaphase. During most of the cell cycle, it is inactivated by securin/cut2 protein. It is also required for pointed nuclear formation. The chain is Separin (cut1) from Schizosaccharomyces pombe (strain 972 / ATCC 24843) (Fission yeast).